The chain runs to 206 residues: MEVDINGESRSTLTTLPFPGAEANSPGKAEAEKPRCSSTPCSPMRRTVSGYQILHMDSNYLVGFTTGEELLKLAQKCTGGEESKAEAMPSLRSKQLDAGLARSSRLYKTRSRYYQPYEIPAVNGRRRRRMPSSGDKCTKSLPYEPYKALHGPLPLCLLKGKRAHSKSLDYLNLDKMIKEPADTEVLQYQLQHLTLRGDRVFARNNT.

Residue Met1 is modified to N-acetylmethionine. The tract at residues 1 to 41 (MEVDINGESRSTLTTLPFPGAEANSPGKAEAEKPRCSSTPC) is disordered. 3 positions are modified to phosphoserine: Ser25, Ser140, and Ser167.

The protein belongs to the UNC119-binding protein family. As to quaternary structure, interacts with UNC119 and UNC119B; interaction preferentially takes place when UNC119 and UNC119B are unliganded with myristoylated proteins. Post-translationally, phosphorylated. In terms of tissue distribution, high expression in normal macrophages, monocytes, and cultured rheumatoid arthritis synovial fibroblasts (RASFs), with lower expression in B- and T-cells, and little to no expression in other tissues and cell lines.

Its subcellular location is the cytoplasm. The protein localises to the cell projection. It is found in the cilium. In terms of biological role, regulates the macrophage function, by enhancing the resolution of inflammation and wound repair functions mediated by M2 macrophages. The regulation of macrophage function is, due at least in part, to its ability to inhibit glycolysis. May also play a role in trafficking of proteins via its interaction with UNC119 and UNC119B cargo adapters: may help the release of UNC119 and UNC119B cargo or the recycling of UNC119 and UNC119B. May play a role in ciliary membrane localization via its interaction with UNC119B and protein transport into photoreceptor cells. The protein is Macrophage immunometabolism regulator of Homo sapiens (Human).